A 156-amino-acid chain; its full sequence is Small ribosomal subunit protein uS7 (156 aa).

It belongs to the universal ribosomal protein uS7 family. Part of the 30S ribosomal subunit. Contacts proteins S9 and S11.

One of the primary rRNA binding proteins, it binds directly to 16S rRNA where it nucleates assembly of the head domain of the 30S subunit. Is located at the subunit interface close to the decoding center, probably blocks exit of the E-site tRNA. The sequence is that of Small ribosomal subunit protein uS7 from Kocuria rhizophila (strain ATCC 9341 / DSM 348 / NBRC 103217 / DC2201).